We begin with the raw amino-acid sequence, 181 residues long: MAAVVALCRKAMETVKTKEFRDYLASTHFWGPVANWGLPLAAFRDMRASPDIISGRMTTALIFYSMAFMRFAYRVQPRNLLLMACHGTNIVAQSMQAGRYLNYHYGGGTTAATTAAVSAASATSTGSVDSSATSTGSVDSSATSTGSVDSSAATTPAAEDPVAHSNCQEITCCYLVTWDCD.

2 helical membrane-spanning segments follow: residues 23 to 42 and 52 to 74; these read YLAS…PLAA and IISG…FAYR. A disordered region spans residues 125 to 154; it reads TGSVDSSATSTGSVDSSATSTGSVDSSAAT.

It belongs to the mitochondrial pyruvate carrier (MPC) (TC 2.A.105) family.

It is found in the mitochondrion inner membrane. May mediate the uptake of pyruvate into mitochondria. The chain is Mitochondrial pyruvate carrier-like protein from Bos taurus (Bovine).